The following is a 299-amino-acid chain: NAD kinase (299 aa).

Catalysis depends on Asp78, which acts as the Proton acceptor. Residues Asp78–Gly79, Asn151–Asp152, Lys162, Arg179, Asp181, Thr192–Ser197, and Gln252 contribute to the NAD(+) site.

The protein belongs to the NAD kinase family. A divalent metal cation serves as cofactor.

It localises to the cytoplasm. The enzyme catalyses NAD(+) + ATP = ADP + NADP(+) + H(+). In terms of biological role, involved in the regulation of the intracellular balance of NAD and NADP, and is a key enzyme in the biosynthesis of NADP. Catalyzes specifically the phosphorylation on 2'-hydroxyl of the adenosine moiety of NAD to yield NADP. This Coxiella burnetii (strain CbuG_Q212) (Coxiella burnetii (strain Q212)) protein is NAD kinase.